A 131-amino-acid chain; its full sequence is MSMQDTVADMLTRVRNAQMAKKQTVSMPSSKLKVAIANVLQQEGYISNVEVAQEETKSTLTITLKYFEGKPVIEMVKRVSRPGLRQYRGKDKLPSVKQGLGIAIVSTSKGIMTDRAARAAGIGGEVIAFVS.

The protein belongs to the universal ribosomal protein uS8 family. In terms of assembly, part of the 30S ribosomal subunit. Contacts proteins S5 and S12.

In terms of biological role, one of the primary rRNA binding proteins, it binds directly to 16S rRNA central domain where it helps coordinate assembly of the platform of the 30S subunit. This is Small ribosomal subunit protein uS8 from Acinetobacter baumannii (strain AB307-0294).